The chain runs to 268 residues: Nickel import ATP-binding protein NikE (268 aa).

The 249-residue stretch at 4 to 252 (LNVSGLSHHY…SSDAGRVLQN (249 aa)) folds into the ABC transporter domain. Residue 45 to 52 (GRSGCGKS) coordinates ATP.

This sequence belongs to the ABC transporter superfamily. Nickel importer (TC 3.A.1.5.3) family. As to quaternary structure, the complex is composed of two ATP-binding proteins (NikD and NikE), two transmembrane proteins (NikB and NikC) and a solute-binding protein (NikA).

The protein resides in the cell inner membrane. It catalyses the reaction Ni(2+)(out) + ATP + H2O = Ni(2+)(in) + ADP + phosphate + H(+). Functionally, part of the ABC transporter complex NikABCDE involved in nickel import. Responsible for energy coupling to the transport system. In Shigella sonnei (strain Ss046), this protein is Nickel import ATP-binding protein NikE.